The following is a 313-amino-acid chain: tRNA dimethylallyltransferase (313 aa).

Gly10–Thr17 is an ATP binding site. Substrate is bound at residue Thr12 to Thr17. 3 interaction with substrate tRNA regions span residues Asp35–Met38, Gln159–Arg163, and Arg240–Arg245.

This sequence belongs to the IPP transferase family. Monomer. Mg(2+) serves as cofactor.

It carries out the reaction adenosine(37) in tRNA + dimethylallyl diphosphate = N(6)-dimethylallyladenosine(37) in tRNA + diphosphate. Its function is as follows. Catalyzes the transfer of a dimethylallyl group onto the adenine at position 37 in tRNAs that read codons beginning with uridine, leading to the formation of N6-(dimethylallyl)adenosine (i(6)A). In Legionella pneumophila (strain Lens), this protein is tRNA dimethylallyltransferase.